A 479-amino-acid chain; its full sequence is Glutamate--tRNA ligase (479 aa).

Positions 9-19 match the 'HIGH' region motif; sequence PSPTGNLHIGT. Positions 243-247 match the 'KMSKS' region motif; the sequence is KLSKR. Lys246 lines the ATP pocket.

The protein belongs to the class-I aminoacyl-tRNA synthetase family. Glutamate--tRNA ligase type 1 subfamily. In terms of assembly, monomer.

Its subcellular location is the cytoplasm. It catalyses the reaction tRNA(Glu) + L-glutamate + ATP = L-glutamyl-tRNA(Glu) + AMP + diphosphate. Its function is as follows. Catalyzes the attachment of glutamate to tRNA(Glu) in a two-step reaction: glutamate is first activated by ATP to form Glu-AMP and then transferred to the acceptor end of tRNA(Glu). This is Glutamate--tRNA ligase from Synechococcus sp. (strain JA-2-3B'a(2-13)) (Cyanobacteria bacterium Yellowstone B-Prime).